The following is a 148-amino-acid chain: Small ribosomal subunit protein eS6 (148 aa).

The protein belongs to the eukaryotic ribosomal protein eS6 family.

In Pyrobaculum islandicum (strain DSM 4184 / JCM 9189 / GEO3), this protein is Small ribosomal subunit protein eS6.